Reading from the N-terminus, the 296-residue chain is Formamidopyrimidine-DNA glycosylase (296 aa).

The Schiff-base intermediate with DNA role is filled by P2. E3 functions as the Proton donor in the catalytic mechanism. Catalysis depends on K61, which acts as the Proton donor; for beta-elimination activity. DNA contacts are provided by H104, R123, and K169. Residues 255 to 289 form an FPG-type zinc finger; sequence DAYGREGEPCRRCGAIMRREKFMNRSSFYCPRCQP. Catalysis depends on R279, which acts as the Proton donor; for delta-elimination activity.

The protein belongs to the FPG family. As to quaternary structure, monomer. The cofactor is Zn(2+).

It carries out the reaction Hydrolysis of DNA containing ring-opened 7-methylguanine residues, releasing 2,6-diamino-4-hydroxy-5-(N-methyl)formamidopyrimidine.. The catalysed reaction is 2'-deoxyribonucleotide-(2'-deoxyribose 5'-phosphate)-2'-deoxyribonucleotide-DNA = a 3'-end 2'-deoxyribonucleotide-(2,3-dehydro-2,3-deoxyribose 5'-phosphate)-DNA + a 5'-end 5'-phospho-2'-deoxyribonucleoside-DNA + H(+). Functionally, involved in base excision repair of DNA damaged by oxidation or by mutagenic agents. Acts as a DNA glycosylase that recognizes and removes damaged bases. Has a preference for oxidized purines, such as 7,8-dihydro-8-oxoguanine (8-oxoG). Has AP (apurinic/apyrimidinic) lyase activity and introduces nicks in the DNA strand. Cleaves the DNA backbone by beta-delta elimination to generate a single-strand break at the site of the removed base with both 3'- and 5'-phosphates. The chain is Formamidopyrimidine-DNA glycosylase from Mycobacterium sp. (strain JLS).